The sequence spans 464 residues: Glucose-6-phosphate isomerase (464 aa).

Glu-290 functions as the Proton donor in the catalytic mechanism. Catalysis depends on residues His-319 and Lys-433.

This sequence belongs to the GPI family.

It localises to the cytoplasm. The enzyme catalyses alpha-D-glucose 6-phosphate = beta-D-fructose 6-phosphate. It functions in the pathway carbohydrate biosynthesis; gluconeogenesis. Its pathway is carbohydrate degradation; glycolysis; D-glyceraldehyde 3-phosphate and glycerone phosphate from D-glucose: step 2/4. Functionally, catalyzes the reversible isomerization of glucose-6-phosphate to fructose-6-phosphate. This Carboxydothermus hydrogenoformans (strain ATCC BAA-161 / DSM 6008 / Z-2901) protein is Glucose-6-phosphate isomerase.